Here is a 108-residue protein sequence, read N- to C-terminus: UPF0145 protein ACIAD2946 (108 aa).

It belongs to the UPF0145 family.

The chain is UPF0145 protein ACIAD2946 from Acinetobacter baylyi (strain ATCC 33305 / BD413 / ADP1).